A 355-amino-acid polypeptide reads, in one-letter code: NAD-dependent protein deacylase sirtuin-6 (355 aa).

At serine 2 the chain carries N-acetylserine. Serine 10 is subject to Phosphoserine. The 246-residue stretch at 27–272 folds into the Deacetylase sirtuin-type domain; the sequence is PEELERKVWE…TRLMKHLGLE (246 aa). Lysine 33 bears the N6-acetyllysine mark. Alanine 53, threonine 57, phenylalanine 64, arginine 65, tryptophan 71, glutamine 113, and histidine 133 together coordinate NAD(+). The Proton acceptor role is filled by histidine 133. Positions 141, 144, and 166 each coordinate Zn(2+). Lysine 170 participates in a covalent cross-link: Glycyl lysine isopeptide (Lys-Gly) (interchain with G-Cter in ubiquitin). Cysteine 177 is a binding site for Zn(2+). The NAD(+) site is built by glycine 214, serine 216, asparagine 240, glutamine 242, and valine 258. Positions 284–355 are disordered; the sequence is RALPPLPRPP…KRVKAEAVPS (72 aa). The segment covering 287–296 has biased composition (pro residues); sequence PPLPRPPTPK. Threonine 294 bears the Phosphothreonine mark. Serine 303 and serine 330 each carry phosphoserine.

It belongs to the sirtuin family. Class IV subfamily. In terms of assembly, homodimer; binds to nucleosomes and DNA ends as a homodimer. Interacts with RELA; interferes with RELA binding to target DNA. Interacts with SMARCA5; promoting recruitment of SMARCA5/SNF2H to double-strand breaks (DSBs) sites. Interacts with the mTORC2 complex; preventing the ability of SIRT6 to deacetylate FOXO1. Interacts with the CLOCK-BMAL1 complex; recruited by the CLOCK-BMAL1 complex to regulate expression of clock-controlled genes. Interacts with CSNK2A2; preventing CSNK2A2 localization to the nucleus. Post-translationally, acetylated at Lys-33. Deacetylation at Lys-33 by SIRT1 promotes homomultimerization and binding to double-strand breaks (DSBs) sites. In terms of processing, phosphorylation at Ser-10 by MAPK8/JNK1 in response to oxidative stress stimulates the mono-ADP-ribosyltransferase activity on PARP1, leading to PARP1 recruitment to double-strand breaks (DSBs). Monoubiquitinated at Lys-170 by STUB1/CHIP, preventing its degradation by the proteasome. Post-translationally, sumoylated, leading to specifically decrease ability to deacetylate histone H3 at 'Lys-56' (H3K56ac).

It is found in the nucleus. The protein localises to the chromosome. It localises to the telomere. The protein resides in the endoplasmic reticulum. It catalyses the reaction N(6)-acetyl-L-lysyl-[protein] + NAD(+) + H2O = 2''-O-acetyl-ADP-D-ribose + nicotinamide + L-lysyl-[protein]. It carries out the reaction N(6)-tetradecanoyl-L-lysyl-[protein] + NAD(+) + H2O = 2''-O-tetradecanoyl-ADP-D-ribose + nicotinamide + L-lysyl-[protein]. The catalysed reaction is N(6)-hexadecanoyl-L-lysyl-[protein] + NAD(+) + H2O = 2''-O-hexadecanoyl-ADP-D-ribose + nicotinamide + L-lysyl-[protein]. The enzyme catalyses L-lysyl-[protein] + NAD(+) = N(6)-(ADP-D-ribosyl)-L-lysyl-[protein] + nicotinamide + H(+). It catalyses the reaction L-arginyl-[protein] + NAD(+) = N(omega)-(ADP-D-ribosyl)-L-arginyl-[protein] + nicotinamide + H(+). Compared to the defatty-acylase activity, the protein deacetylase activity is weak in vitro, and requires activation. The histone deacetylase activity is strongly activated upon binding to nucleosomes and chromatin in vivo. Two molecules of SIRT6 associate with the acidic patch of one nucleosome, while the C-terminal disordered region of SIRT6 associates with nucleosomal DNA, leading to efficient histone deacetylation. The protein-lysine deacetylase activity is also activated by long-chain free fatty-acids. Functionally, NAD-dependent protein deacetylase, deacylase and mono-ADP-ribosyltransferase that plays an essential role in DNA damage repair, telomere maintenance, metabolic homeostasis, inflammation, tumorigenesis and aging. Displays protein-lysine deacetylase or defatty-acylase (demyristoylase and depalmitoylase) activity, depending on the context. Acts as a key histone deacetylase by catalyzing deacetylation of histone H3 at 'Lys-9', 'Lys-18' and 'Lys-56' (H3K9ac, H3K18ac and H3K56ac, respectively), suppressing target gene expression of several transcription factors, including NF-kappa-B. Acts as an inhibitor of transcription elongation by mediating deacetylation of H3K9ac and H3K56ac, preventing release of NELFE from chromatin and causing transcriptional pausing. Involved in DNA repair by promoting double-strand break (DSB) repair: acts as a DSB sensor by recognizing and binding DSB sites, leading to (1) recruitment of DNA repair proteins, such as SMARCA5/SNF2H, and (2) deacetylation of histone H3K9ac and H3K56ac. SIRT6 participation to DSB repair is probably involved in extension of life span. Also promotes DNA repair by deacetylating non-histone proteins, such as DDB2 and p53/TP53. Specifically deacetylates H3K18ac at pericentric heterochromatin, thereby maintaining pericentric heterochromatin silencing at centromeres and protecting against genomic instability and cellular senescence. Involved in telomere maintenance by catalyzing deacetylation of histone H3 in telomeric chromatin, regulating telomere position effect and telomere movement in response to DNA damage. Required for embryonic stem cell differentiation by mediating histone deacetylation of H3K9ac. Plays a major role in metabolism by regulating processes such as glycolysis, gluconeogenesis, insulin secretion and lipid metabolism. Inhibits glycolysis via histone deacetylase activity and by acting as a corepressor of the transcription factor HIF1A, thereby controlling the expression of multiple glycolytic genes. Has tumor suppressor activity by repressing glycolysis, thereby inhibiting the Warburg effect. Also regulates glycolysis and tumorigenesis by mediating deacetylation and nuclear export of non-histone proteins, such as isoform M2 of PKM (PKM2). Acts as a negative regulator of gluconeogenesis by mediating deacetylation of non-histone proteins, such as FOXO1 and KAT2A/GCN5. Promotes beta-oxidation of fatty acids during fasting by catalyzing deacetylation of NCOA2, inducing coactivation of PPARA. Acts as a regulator of lipid catabolism in brown adipocytes, both by catalyzing deacetylation of histones and non-histone proteins, such as FOXO1. Also acts as a regulator of circadian rhythms, both by regulating expression of clock-controlled genes involved in lipid and carbohydrate metabolism, and by catalyzing deacetylation of PER2. The defatty-acylase activity is specifically involved in regulation of protein secretion. Has high activity toward long-chain fatty acyl groups and mediates protein-lysine demyristoylation and depalmitoylation of target proteins, such as RRAS2 and TNF, thereby regulating their secretion. Also acts as a mono-ADP-ribosyltransferase by mediating mono-ADP-ribosylation of PARP1, TRIM28/KAP1 or SMARCC2/BAF170. Mono-ADP-ribosyltransferase activity is involved in DNA repair, cellular senescence, repression of LINE-1 retrotransposon elements and regulation of transcription. This chain is NAD-dependent protein deacylase sirtuin-6, found in Macaca fascicularis (Crab-eating macaque).